A 608-amino-acid chain; its full sequence is Chaperone protein HtpG (608 aa).

The a; substrate-binding stretch occupies residues 1 to 332; it reads MQFQTEVNQL…VEDLPLNVSR (332 aa). Residues 333-536 are b; it reads EILQENQILK…KNKPDFAMQQ (204 aa). A c region spans residues 537-608; sequence LLKQMGQEQN…LTKIINKAFS (72 aa).

The protein belongs to the heat shock protein 90 family. Homodimer.

Its subcellular location is the cytoplasm. Molecular chaperone. Has ATPase activity. The polypeptide is Chaperone protein HtpG (Campylobacter jejuni (strain RM1221)).